The following is a 335-amino-acid chain: Glycerol-3-phosphate dehydrogenase [NAD(P)+] (335 aa).

Positions 15, 16, 36, and 110 each coordinate NADPH. Lys-110, Gly-139, and Thr-141 together coordinate sn-glycerol 3-phosphate. Position 143 (Ala-143) interacts with NADPH. 5 residues coordinate sn-glycerol 3-phosphate: Lys-195, Asp-248, Ser-258, Arg-259, and Asn-260. Catalysis depends on Lys-195, which acts as the Proton acceptor. Arg-259 contacts NADPH. Positions 283 and 285 each coordinate NADPH.

The protein belongs to the NAD-dependent glycerol-3-phosphate dehydrogenase family.

It localises to the cytoplasm. The catalysed reaction is sn-glycerol 3-phosphate + NAD(+) = dihydroxyacetone phosphate + NADH + H(+). It carries out the reaction sn-glycerol 3-phosphate + NADP(+) = dihydroxyacetone phosphate + NADPH + H(+). The protein operates within membrane lipid metabolism; glycerophospholipid metabolism. Functionally, catalyzes the reduction of the glycolytic intermediate dihydroxyacetone phosphate (DHAP) to sn-glycerol 3-phosphate (G3P), the key precursor for phospholipid synthesis. The sequence is that of Glycerol-3-phosphate dehydrogenase [NAD(P)+] from Haemophilus influenzae (strain 86-028NP).